The sequence spans 763 residues: Xaa-Pro dipeptidyl-peptidase (763 aa).

Catalysis depends on charge relay system residues S349, D469, and H499.

It belongs to the peptidase S15 family. In terms of assembly, homodimer.

Its subcellular location is the cytoplasm. The catalysed reaction is Hydrolyzes Xaa-Pro-|- bonds to release unblocked, N-terminal dipeptides from substrates including Ala-Pro-|-p-nitroanilide and (sequentially) Tyr-Pro-|-Phe-Pro-|-Gly-Pro-|-Ile.. Its function is as follows. Removes N-terminal dipeptides sequentially from polypeptides having unsubstituted N-termini provided that the penultimate residue is proline. The sequence is that of Xaa-Pro dipeptidyl-peptidase from Streptococcus macedonicus (Streptococcus gallolyticus macedonicus).